A 304-amino-acid chain; its full sequence is Homoserine kinase (304 aa).

86–96 (PLARGLGSSAA) lines the ATP pocket.

It belongs to the GHMP kinase family. Homoserine kinase subfamily.

It is found in the cytoplasm. It carries out the reaction L-homoserine + ATP = O-phospho-L-homoserine + ADP + H(+). The protein operates within amino-acid biosynthesis; L-threonine biosynthesis; L-threonine from L-aspartate: step 4/5. In terms of biological role, catalyzes the ATP-dependent phosphorylation of L-homoserine to L-homoserine phosphate. This chain is Homoserine kinase, found in Carboxydothermus hydrogenoformans (strain ATCC BAA-161 / DSM 6008 / Z-2901).